The chain runs to 427 residues: 3-phosphoshikimate 1-carboxyvinyltransferase (427 aa).

3 residues coordinate 3-phosphoshikimate: K22, S23, and R27. K22 serves as a coordination point for phosphoenolpyruvate. Phosphoenolpyruvate contacts are provided by G96 and R124. The 3-phosphoshikimate site is built by S169, S170, Q171, S197, D313, N336, and K340. Q171 provides a ligand contact to phosphoenolpyruvate. The active-site Proton acceptor is the D313. R344, R386, and K411 together coordinate phosphoenolpyruvate.

It belongs to the EPSP synthase family. As to quaternary structure, monomer.

It is found in the cytoplasm. It carries out the reaction 3-phosphoshikimate + phosphoenolpyruvate = 5-O-(1-carboxyvinyl)-3-phosphoshikimate + phosphate. The protein operates within metabolic intermediate biosynthesis; chorismate biosynthesis; chorismate from D-erythrose 4-phosphate and phosphoenolpyruvate: step 6/7. Its function is as follows. Catalyzes the transfer of the enolpyruvyl moiety of phosphoenolpyruvate (PEP) to the 5-hydroxyl of shikimate-3-phosphate (S3P) to produce enolpyruvyl shikimate-3-phosphate and inorganic phosphate. In Shigella flexneri serotype 5b (strain 8401), this protein is 3-phosphoshikimate 1-carboxyvinyltransferase.